Reading from the N-terminus, the 379-residue chain is Beta sliding clamp (379 aa).

The protein belongs to the beta sliding clamp family. Forms a ring-shaped head-to-tail homodimer around DNA which binds and tethers DNA polymerases and other proteins to the DNA. The DNA replisome complex has a single clamp-loading complex (3 tau and 1 each of delta, delta', psi and chi subunits) which binds 3 Pol III cores (1 core on the leading strand and 2 on the lagging strand) each with a beta sliding clamp dimer. Additional proteins in the replisome are other copies of gamma, psi and chi, Ssb, DNA helicase and RNA primase.

The protein localises to the cytoplasm. Its function is as follows. Confers DNA tethering and processivity to DNA polymerases and other proteins. Acts as a clamp, forming a ring around DNA (a reaction catalyzed by the clamp-loading complex) which diffuses in an ATP-independent manner freely and bidirectionally along dsDNA. Initially characterized for its ability to contact the catalytic subunit of DNA polymerase III (Pol III), a complex, multichain enzyme responsible for most of the replicative synthesis in bacteria; Pol III exhibits 3'-5' exonuclease proofreading activity. The beta chain is required for initiation of replication as well as for processivity of DNA replication. The protein is Beta sliding clamp (dnaN) of Rickettsia bellii (strain RML369-C).